A 291-amino-acid chain; its full sequence is MNALFTTAMALRPLDSDPGNPACRVFEGELNEHWTIGPKVHGGAMVALCANAARTAYGAAGQQPMRQPVAVSASFLWAPDPGTMRLVTSIRKRGRRISVADVELTQGGRTAVHAVVTLGEPEHFLPGVDGSGGASGTAPLLSANPVVELMAPEPPEGVVPIGPGHQLAGLVHLGEGCDVRPVLSTLRSATDGRPPVIQLWARPRGVAPDALFALLCGDLSAPVTFAVDRTGWAPTVALTAYLRALPADGWLRVLCTCVEIGQDWFDEDHIVVDRLGRIVVQTRQLAMVPAQ.

A DAGKc domain is found at proline 68–glycine 205.

This is an uncharacterized protein from Mycobacterium tuberculosis (strain CDC 1551 / Oshkosh).